We begin with the raw amino-acid sequence, 155 residues long: Small ribosomal subunit protein uS7 (155 aa).

Belongs to the universal ribosomal protein uS7 family. In terms of assembly, part of the 30S ribosomal subunit. Contacts proteins S9 and S11.

One of the primary rRNA binding proteins, it binds directly to 16S rRNA where it nucleates assembly of the head domain of the 30S subunit. Is located at the subunit interface close to the decoding center, probably blocks exit of the E-site tRNA. The chain is Small ribosomal subunit protein uS7 from Pseudothermotoga lettingae (strain ATCC BAA-301 / DSM 14385 / NBRC 107922 / TMO) (Thermotoga lettingae).